The sequence spans 329 residues: DNA-directed RNA polymerase subunit alpha (329 aa).

Positions 1–235 (MQGSVTEFLK…EQLDAFVDLR (235 aa)) are alpha N-terminal domain (alpha-NTD). Positions 249–329 (FDPILLRPVD…NWPPASIAED (81 aa)) are alpha C-terminal domain (alpha-CTD).

The protein belongs to the RNA polymerase alpha chain family. In terms of assembly, homodimer. The RNAP catalytic core consists of 2 alpha, 1 beta, 1 beta' and 1 omega subunit. When a sigma factor is associated with the core the holoenzyme is formed, which can initiate transcription.

It catalyses the reaction RNA(n) + a ribonucleoside 5'-triphosphate = RNA(n+1) + diphosphate. DNA-dependent RNA polymerase catalyzes the transcription of DNA into RNA using the four ribonucleoside triphosphates as substrates. In Actinobacillus pleuropneumoniae serotype 5b (strain L20), this protein is DNA-directed RNA polymerase subunit alpha.